We begin with the raw amino-acid sequence, 312 residues long: E3 ubiquitin-protein ligase RNF126-B (312 aa).

Zn(2+) is bound by residues C13, C16, C29, and C32. The segment at 13-32 (CHSCTAEITPRLPEYTCPRC) adopts a C4-type zinc-finger fold. 2 disordered regions span residues 41 to 63 (PETSRNSESNSSNNSGTDQNRPS) and 96 to 139 (GTSG…RNEG). Low complexity predominate over residues 44–55 (SRNSESNSSNNS). A compositionally biased stretch (basic and acidic residues) spans 102 to 115 (EETRDGESRREHQS). Residues 124-134 (PRARMSTRRGA) are compositionally biased toward basic residues. Residues 228-269 (CPVCKEDYTVGESVRQLPCNHLFHNDCIIPWLEQHDTCPVCR) form an RING-type zinc finger. The interval 275–312 (QNTATNPPGLTDMTFSSSSTSSSSSTSPTDENNTANNS) is disordered. Residues 290–301 (SSSSTSSSSSTS) are compositionally biased toward low complexity. Residues 302 to 312 (PTDENNTANNS) show a composition bias toward polar residues.

It is found in the cytoplasm. The protein resides in the nucleus. The catalysed reaction is S-ubiquitinyl-[E2 ubiquitin-conjugating enzyme]-L-cysteine + [acceptor protein]-L-lysine = [E2 ubiquitin-conjugating enzyme]-L-cysteine + N(6)-ubiquitinyl-[acceptor protein]-L-lysine.. It participates in protein modification; protein ubiquitination. E3 ubiquitin-protein ligase that mediates ubiquitination oF target proteins. Depending on the associated E2 ligase, mediates 'Lys-27'-, 'Lys-29'-, 'Lys-48'- and/or 'Lys-63'-linked polyubiquitination of substrates. Part of a BAG6-dependent quality control process ensuring that proteins of the secretory pathway that are mislocalized to the cytosol are degraded by the proteasome. Probably acts by providing the ubiquitin ligase activity associated with the BAG6 complex and be responsible for ubiquitination of the hydrophobic mislocalized proteins and their targeting to the proteasome. The protein is E3 ubiquitin-protein ligase RNF126-B of Xenopus laevis (African clawed frog).